A 284-amino-acid polypeptide reads, in one-letter code: Bifunctional protein FolD (284 aa).

Residues 165–167 (GRS) and Ser-190 contribute to the NADP(+) site.

Belongs to the tetrahydrofolate dehydrogenase/cyclohydrolase family. As to quaternary structure, homodimer.

It catalyses the reaction (6R)-5,10-methylene-5,6,7,8-tetrahydrofolate + NADP(+) = (6R)-5,10-methenyltetrahydrofolate + NADPH. The enzyme catalyses (6R)-5,10-methenyltetrahydrofolate + H2O = (6R)-10-formyltetrahydrofolate + H(+). Its pathway is one-carbon metabolism; tetrahydrofolate interconversion. Functionally, catalyzes the oxidation of 5,10-methylenetetrahydrofolate to 5,10-methenyltetrahydrofolate and then the hydrolysis of 5,10-methenyltetrahydrofolate to 10-formyltetrahydrofolate. The protein is Bifunctional protein FolD of Streptococcus equi subsp. zooepidemicus (strain H70).